The sequence spans 221 residues: Protein GrpE (221 aa).

The interval methionine 1 to alanine 43 is disordered. Over residues arginine 8 to asparagine 20 the composition is skewed to basic and acidic residues.

It belongs to the GrpE family. In terms of assembly, homodimer.

The protein resides in the cytoplasm. Its function is as follows. Participates actively in the response to hyperosmotic and heat shock by preventing the aggregation of stress-denatured proteins, in association with DnaK and GrpE. It is the nucleotide exchange factor for DnaK and may function as a thermosensor. Unfolded proteins bind initially to DnaJ; upon interaction with the DnaJ-bound protein, DnaK hydrolyzes its bound ATP, resulting in the formation of a stable complex. GrpE releases ADP from DnaK; ATP binding to DnaK triggers the release of the substrate protein, thus completing the reaction cycle. Several rounds of ATP-dependent interactions between DnaJ, DnaK and GrpE are required for fully efficient folding. This Deinococcus radiodurans (strain ATCC 13939 / DSM 20539 / JCM 16871 / CCUG 27074 / LMG 4051 / NBRC 15346 / NCIMB 9279 / VKM B-1422 / R1) protein is Protein GrpE.